The primary structure comprises 195 residues: Imidazoleglycerol-phosphate dehydratase (195 aa).

Belongs to the imidazoleglycerol-phosphate dehydratase family.

Its subcellular location is the cytoplasm. It catalyses the reaction D-erythro-1-(imidazol-4-yl)glycerol 3-phosphate = 3-(imidazol-4-yl)-2-oxopropyl phosphate + H2O. Its pathway is amino-acid biosynthesis; L-histidine biosynthesis; L-histidine from 5-phospho-alpha-D-ribose 1-diphosphate: step 6/9. The protein is Imidazoleglycerol-phosphate dehydratase of Cupriavidus taiwanensis (strain DSM 17343 / BCRC 17206 / CCUG 44338 / CIP 107171 / LMG 19424 / R1) (Ralstonia taiwanensis (strain LMG 19424)).